The following is a 440-amino-acid chain: MNKRLSRGKISLLASVFVTTTFMGGVNVLASTAKTGIRDITSQQVVKEMKVGWNLGNTMDATGGETNWGNPLTTHAMIDKVKAAGFNTLRLPITWDGHIGAAPDYAIDATWMNRVEEIANYAFDNNMYVIINLHHEDGWLKPYYANEAEVKAKITKVWTQIANRFKDYGDYLIFETMNEPRPVGAADEWSGGSYENRDMVNRYNLTAVNTIRATGGNNALRHIMVPTLAAAALSTTMNDYIVPNNDSRVIVSLHMYSPYFFSADLTSQWTTATWGSDADKAALSADFDAVYNKFVKNGRAVVIGEMGTINKNNLDSRVKHAEYYAKEATVRGITPIWWDNGYCVAGKEQTFGIFNRKNLTWCCPEVMQAFIRGAGATQTQTSYSLGDVNKDGKVNAIDYAVLKSILLGTNTNVDLSVSDMNKDGKVNALDLAVLKKMLLS.

Residues 1–33 (MNKRLSRGKISLLASVFVTTTFMGGVNVLASTA) form the signal peptide. The Proton donor role is filled by Glu-179. Catalysis depends on Glu-305, which acts as the Nucleophile. The Dockerin domain maps to 381 to 440 (TSYSLGDVNKDGKVNAIDYAVLKSILLGTNTNVDLSVSDMNKDGKVNALDLAVLKKMLLS).

It belongs to the glycosyl hydrolase 5 (cellulase A) family.

It catalyses the reaction Endohydrolysis of (1-&gt;4)-beta-D-glucosidic linkages in cellulose, lichenin and cereal beta-D-glucans.. It carries out the reaction Endohydrolysis of (1-&gt;4)-beta-D-xylosidic linkages in xylans.. In terms of biological role, has endoglucanase activity on carboxymethyl-cellulose (CMC), xylan and lichenan, but not Avicel. The protein is Endoglucanase B (engB) of Clostridium cellulovorans (strain ATCC 35296 / DSM 3052 / OCM 3 / 743B).